We begin with the raw amino-acid sequence, 137 residues long: Large ribosomal subunit protein uL16 (137 aa).

This sequence belongs to the universal ribosomal protein uL16 family. Part of the 50S ribosomal subunit.

In terms of biological role, binds 23S rRNA and is also seen to make contacts with the A and possibly P site tRNAs. The polypeptide is Large ribosomal subunit protein uL16 (Psychrobacter cryohalolentis (strain ATCC BAA-1226 / DSM 17306 / VKM B-2378 / K5)).